Here is a 75-residue protein sequence, read N- to C-terminus: UPF0352 protein KPN78578_25810 (75 aa).

This sequence belongs to the UPF0352 family.

The polypeptide is UPF0352 protein KPN78578_25810 (Klebsiella pneumoniae subsp. pneumoniae (strain ATCC 700721 / MGH 78578)).